The following is a 597-amino-acid chain: Hydrogenase-1 large chain (597 aa).

Ni(2+) contacts are provided by C76, C79, C576, and C579.

Belongs to the [NiFe]/[NiFeSe] hydrogenase large subunit family. Heterodimer of a large and a small subunit. Requires Ni(2+) as cofactor.

It is found in the cell membrane. It carries out the reaction H2 + A = AH2. The sequence is that of Hydrogenase-1 large chain (hyaB) from Citrobacter freundii.